The chain runs to 113 residues: UPF0122 protein SSU98_0878 (113 aa).

It belongs to the UPF0122 family.

In terms of biological role, might take part in the signal recognition particle (SRP) pathway. This is inferred from the conservation of its genetic proximity to ftsY/ffh. May be a regulatory protein. In Streptococcus suis (strain 98HAH33), this protein is UPF0122 protein SSU98_0878.